The sequence spans 143 residues: Calcitonin (143 aa).

The N-terminal stretch at 1-25 (MGFGKSSPFLAFSILVLCQAGSLQA) is a signal peptide. Positions 26–84 (TPLRSALETLPDPGALSEKEGRLLLAALVKAYVQRKTNELEQEEEQEETEDSSLDSSRA) are excised as a propeptide. Ser-42 is subject to Phosphoserine. Residues 62 to 86 (TNELEQEEEQEETEDSSLDSSRAKR) are disordered. The span at 65–78 (LEQEEEQEETEDSS) shows a compositional bias: acidic residues. A disulfide bond links Cys-87 and Cys-93. The disordered stretch occupies residues 112–143 (GFGPETPGKKRDIANSLEKDLSSHFGVPTDAN). Residue Pro-118 is modified to Proline amide. Positions 118–133 (PGKKRDIANSLEKDLS) are enriched in basic and acidic residues. Positions 122 to 143 (RDIANSLEKDLSSHFGVPTDAN) are excised as a propeptide.

Belongs to the calcitonin family.

The protein resides in the secreted. Its function is as follows. Calcitonin is a peptide hormone that causes a rapid but short-lived drop in the level of calcium and phosphate in blood by promoting the incorporation of those ions in the bones. Calcitonin function is mediated by the calcitonin receptor/CALCR and the CALCR-RAMP2 (AMYR2) receptor complex. The sequence is that of Calcitonin (CALCA) from Ovis aries (Sheep).